Consider the following 619-residue polypeptide: Kinesin light chain 4 (619 aa).

N-acetylserine is present on serine 2. A coiled-coil region spans residues 32–150 (GLESLHSEHQ…EEEKKHLEFL (119 aa)). Residues 55–88 (QQGGHEEGLVHEKARQLRRSMENIELGLSEAQVM) form a TPR 1 repeat. Positions 156–175 (YDEDGHSMEEKEGDASKDSL) are enriched in basic and acidic residues. Residues 156–200 (YDEDGHSMEEKEGDASKDSLDDLFPNEEEEDSSNDLSRGQGAAAA) form a disordered region. A Phosphoserine modification is found at serine 174. Over residues 179-188 (FPNEEEEDSS) the composition is skewed to acidic residues. 5 TPR repeats span residues 211-244 (LRTLHNLVIQYAAQGRYEVAVPLCKQALEDLERT), 253-286 (ATMLNILALVYRDQNKYKEAAHLLNDALSIREST), 295-328 (AATLNNLAVLYGKRGKYKEAEPLCQRALEIREKV), 337-370 (AKQLNNLALLCQNQGKYEAVERYYQRALAIYERQ), and 379-412 (ARTKNNLASCYLKQGKYSEAETLYKEILTRAHVQ). Serine 460 carries the phosphoserine modification. The stretch at 464–497 (NTTLRNLGALYRRQGKLEAAETLEECALRSRKQG) is one TPR 7 repeat. Serine 565, serine 566, and serine 590 each carry phosphoserine. The segment at 571-619 (RKLQGTEPRPSSSNMKRAASLNYLNQPNAAPLQTSRGLSASTVDLSSSS) is disordered. A compositionally biased stretch (polar residues) spans 592-608 (NYLNQPNAAPLQTSRGL). Residues 609–619 (SASTVDLSSSS) show a composition bias toward low complexity. Position 612 is a phosphothreonine (threonine 612).

Belongs to the kinesin light chain family. In terms of assembly, oligomeric complex composed of two heavy chains and two light chains.

The protein localises to the cytoplasm. It localises to the cytoskeleton. Its function is as follows. Kinesin is a microtubule-associated force-producing protein that may play a role in organelle transport. The light chain may function in coupling of cargo to the heavy chain or in the modulation of its ATPase activity. The protein is Kinesin light chain 4 (Klc4) of Rattus norvegicus (Rat).